The sequence spans 360 residues: 4-hydroxy-3-methylbut-2-en-1-yl diphosphate synthase (flavodoxin) (360 aa).

[4Fe-4S] cluster is bound by residues C265, C268, C300, and E307.

This sequence belongs to the IspG family. [4Fe-4S] cluster is required as a cofactor.

The enzyme catalyses (2E)-4-hydroxy-3-methylbut-2-enyl diphosphate + oxidized [flavodoxin] + H2O + 2 H(+) = 2-C-methyl-D-erythritol 2,4-cyclic diphosphate + reduced [flavodoxin]. Its pathway is isoprenoid biosynthesis; isopentenyl diphosphate biosynthesis via DXP pathway; isopentenyl diphosphate from 1-deoxy-D-xylulose 5-phosphate: step 5/6. In terms of biological role, converts 2C-methyl-D-erythritol 2,4-cyclodiphosphate (ME-2,4cPP) into 1-hydroxy-2-methyl-2-(E)-butenyl 4-diphosphate. This chain is 4-hydroxy-3-methylbut-2-en-1-yl diphosphate synthase (flavodoxin), found in Brevibacillus brevis (strain 47 / JCM 6285 / NBRC 100599).